A 500-amino-acid polypeptide reads, in one-letter code: Inner membrane transporter YjeM (500 aa).

Over 1-10 (MTHTIKKMSL) the chain is Cytoplasmic. Residues 11-31 (IGLILMIFTSVFGFANSPSAF) form a helical membrane-spanning segment. Over 32 to 37 (YLMGYS) the chain is Periplasmic. Residues 38–58 (AIPWYIFSALLFFIPFALMMA) form a helical membrane-spanning segment. Over 59-83 (EMGSAYRKEEGGIYSWMNNSVGPRY) the chain is Cytoplasmic. The helical transmembrane segment at 84-104 (AFIGTFMWFSSYVIWMVSTAA) threads the bilayer. The Periplasmic segment spans residues 105-124 (KIWVPFSTFVFGADMTQHWR). Residues 125–145 (IAGLEPTQVVGLLAVGWMILV) traverse the membrane as a helical segment. The Cytoplasmic portion of the chain corresponds to 146-163 (TCVAARGINKIARITAVG). Residues 164–184 (GIAVMCLNLVLLLVSVAILLL) traverse the membrane as a helical segment. Residues 185 to 209 (NGGHFAQEINFTSSPNPGYHSGLAM) are Periplasmic-facing. The chain crosses the membrane as a helical span at residues 210–230 (LSFVVFAIFAYGGIEAVGGLV). At 231-243 (DKTEKPEKNFAKG) the chain is on the cytoplasmic side. A helical membrane pass occupies residues 244–264 (IVFAAIVISIGYSLAIFLWGV). Residues 265 to 308 (STNWQQILSNSAVNLGNITYILMSSLGTTLGNALNLSPEAAMTV) lie on the Periplasmic side of the membrane. The chain crosses the membrane as a helical span at residues 309–329 (GVWFARITGLSMFLAYTGAFF). Topologically, residues 330 to 361 (TLSYSPLKAIIQGTPKALWPAPMTTLNANGMP) are cytoplasmic. Residues 362-382 (ATAMWLQCVLVSLFILLVSFG) form a helical membrane-spanning segment. Residues 383–394 (GDTASAFYNKLT) are Periplasmic-facing. Residues 395–415 (LMANVSMTLPYLFLALAFPFF) form a helical membrane-spanning segment. Over 416 to 433 (KARQDLERPFVLFKTKAS) the chain is Cytoplasmic. Residues 434-454 (TLVATGVVVLVVTFANVFTII) traverse the membrane as a helical segment. The Periplasmic segment spans residues 455 to 462 (QPVIEAGD). A helical transmembrane segment spans residues 463–483 (WDSALWMIGGPIFFSLLAMAI). Over 484-500 (YQNYSSRMSADPEWAAE) the chain is Cytoplasmic.

It belongs to the amino acid-polyamine-organocation (APC) superfamily.

The protein resides in the cell inner membrane. This Salmonella typhi protein is Inner membrane transporter YjeM (yjeM).